We begin with the raw amino-acid sequence, 314 residues long: Transcriptional regulatory protein GlnL (314 aa).

The Response regulatory domain maps to 2–118; sequence RFFIADDDRA…EIVTVLQKVK (117 aa). A 4-aspartylphosphate modification is found at aspartate 54.

In terms of processing, phosphorylated by GlnK.

The protein resides in the cytoplasm. Functionally, member of the two-component regulatory system GlnL/GlnK that positively regulates the expression of the glsA-glnT operon in response to glutamine. GlnL binds the promoter region of glsA-glnT in vitro. The polypeptide is Transcriptional regulatory protein GlnL (glnL) (Bacillus subtilis (strain 168)).